We begin with the raw amino-acid sequence, 865 residues long: Leucine-rich repeat-containing protein 66 (865 aa).

A helical membrane pass occupies residues 4–24 (FYARVTVMVTGLCFVGTVTNP). A glycan (N-linked (GlcNAc...) asparagine) is linked at asparagine 42. 5 LRR repeats span residues 138–160 (RLKVLLLQRNQLGPTPKGLWKLK), 161–182 (PLCSLDLSFNRRVGIGLSGFHG), 185–206 (QLKSIYLKNNKILTIHPEAFKG), 209–230 (KLQVVDLRSSALTMLVPIVTIA), and 235–255 (NLELGLADNQWQCNESDANFQ). The N-linked (GlcNAc...) asparagine glycan is linked to asparagine 248. A helical transmembrane segment spans residues 366-386 (ALAVCLSVFITFVVAFCLGAF). Disordered stretches follow at residues 463–522 (RMLG…PGQH) and 654–749 (DTPS…AESV). Over residues 470–479 (MDPSSQQSPG) the composition is skewed to polar residues. Positions 675-688 (AVQRDASFDPHDDL) are enriched in basic and acidic residues. The span at 702–713 (FTLSSEGSQDTR) shows a compositional bias: polar residues. Serine 714 and serine 748 each carry phosphoserine. One can recognise an LRRNT domain in the interval 728-759 (SQPLPSRNLGEYKDSVTSAESVEDITSQQTLE). A glycan (N-linked (GlcNAc...) asparagine) is linked at asparagine 787. Residues 840–865 (FPNIDSSPSPPCSDQDPSDPEEHDTK) are disordered. A compositionally biased stretch (acidic residues) spans 855–865 (DPSDPEEHDTK).

It localises to the membrane. The protein is Leucine-rich repeat-containing protein 66 (Lrrc66) of Rattus norvegicus (Rat).